Reading from the N-terminus, the 305-residue chain is Carbonic anhydrase 5A, mitochondrial (305 aa).

Residues 1–38 constitute a mitochondrion transit peptide; sequence MLGRNTWKTSAFSFLVEQMWAPLWSRSMRPGRWCSQRS. The region spanning 39–296 is the Alpha-carbonic anhydrase domain; it reads CAWQTSNNTL…LMNRKVWASF (258 aa). The Zn(2+) site is built by His-130, His-132, and His-155.

Belongs to the alpha-carbonic anhydrase family. It depends on Zn(2+) as a cofactor.

Its subcellular location is the mitochondrion. It carries out the reaction hydrogencarbonate + H(+) = CO2 + H2O. With respect to regulation, activated by L- and D-histidine. Activated by L- and D-phenylalanine. Activated by L-adrenaline. Inhibited by coumarins, sulfonamide derivatives such as acetazolamide and Foscarnet (phosphonoformate trisodium salt). Activated by histamine. Functionally, mitochondrial carbonic anhydrase that catalyzes the reversible conversion of carbon dioxide to bicarbonate/HCO3. Mitochondria are impermeable to HCO3, and thus this intramitochondrial carbonic anhydrase is pivotal in providing HCO3 for multiple mitochondrial enzymes that catalyze the formation of essential metabolites of intermediary metabolism in the urea and Krebs cycles. The sequence is that of Carbonic anhydrase 5A, mitochondrial from Homo sapiens (Human).